A 132-amino-acid chain; its full sequence is Large ribosomal subunit protein bL19 (132 aa).

The protein belongs to the bacterial ribosomal protein bL19 family.

This protein is located at the 30S-50S ribosomal subunit interface and may play a role in the structure and function of the aminoacyl-tRNA binding site. In Methylobacterium radiotolerans (strain ATCC 27329 / DSM 1819 / JCM 2831 / NBRC 15690 / NCIMB 10815 / 0-1), this protein is Large ribosomal subunit protein bL19.